Consider the following 49-residue polypeptide: Large ribosomal subunit protein bL33B (49 aa).

It belongs to the bacterial ribosomal protein bL33 family.

This Staphylococcus saprophyticus subsp. saprophyticus (strain ATCC 15305 / DSM 20229 / NCIMB 8711 / NCTC 7292 / S-41) protein is Large ribosomal subunit protein bL33B.